The primary structure comprises 170 residues: Translationally-controlled tumor protein homolog (170 aa).

The region spanning 1–170 (MLIYNDILNG…WKHGLKETKV (170 aa)) is the TCTP domain.

It belongs to the TCTP family.

Its subcellular location is the cytoplasm. It is found in the cytoskeleton. Its function is as follows. Involved in protein synthesis. Involved in microtubule stabilization. This Gibberella zeae (strain ATCC MYA-4620 / CBS 123657 / FGSC 9075 / NRRL 31084 / PH-1) (Wheat head blight fungus) protein is Translationally-controlled tumor protein homolog.